Here is a 401-residue protein sequence, read N- to C-terminus: Nicotinate phosphoribosyltransferase (401 aa).

Residue histidine 224 is modified to Phosphohistidine; by autocatalysis.

This sequence belongs to the NAPRTase family. Transiently phosphorylated on a His residue during the reaction cycle. Phosphorylation strongly increases the affinity for substrates and increases the rate of nicotinate D-ribonucleotide production. Dephosphorylation regenerates the low-affinity form of the enzyme, leading to product release.

The catalysed reaction is nicotinate + 5-phospho-alpha-D-ribose 1-diphosphate + ATP + H2O = nicotinate beta-D-ribonucleotide + ADP + phosphate + diphosphate. Its pathway is cofactor biosynthesis; NAD(+) biosynthesis; nicotinate D-ribonucleotide from nicotinate: step 1/1. In terms of biological role, catalyzes the synthesis of beta-nicotinate D-ribonucleotide from nicotinate and 5-phospho-D-ribose 1-phosphate at the expense of ATP. In Pseudomonas putida (strain GB-1), this protein is Nicotinate phosphoribosyltransferase.